The sequence spans 121 residues: Neuromedin-B (121 aa).

Positions 1 to 24 are cleaved as a signal peptide; the sequence is MARRAGGARMFGSLLLFALLAAGV. Residue Met56 is modified to Methionine amide. Residues 60-121 constitute a propeptide that is removed on maturation; the sequence is SLEPSSPSPL…RRLLVQILQK (62 aa).

It belongs to the bombesin/neuromedin-B/ranatensin family.

Its subcellular location is the secreted. It is found in the cell projection. It localises to the neuron projection. Its function is as follows. Stimulates smooth muscle contraction. Induces sighing by acting directly on the pre-Botzinger complex, a cluster of several thousand neurons in the ventrolateral medulla responsible for inspiration during respiratory activity. Contributes to the induction of sneezing following exposure to chemical irritants or allergens which causes release of NMB by nasal sensory neurons and activation of NMBR-expressing neurons in the sneeze-evoking region of the brainstem. These in turn activate neurons of the caudal ventral respiratory group, giving rise to the sneezing response. Contributes to induction of acute itch, possibly through activation of the NMBR receptor on dorsal root ganglion neurons. Increases expression of NMBR and steroidogenic mediators STAR, CYP11A1 and HSD3B1 in Leydig cells, induces secretion of testosterone by Leydig cells and also promotes Leydig cell proliferation. Plays a role in the innate immune response to influenza A virus infection by enhancing interferon alpha expression and reducing expression of IL6. Plays a role in CSF1-induced proliferation of osteoclast precursors by contributing to the positive regulation of the expression of the CSF1 receptor CSF1R. The sequence is that of Neuromedin-B (NMB) from Homo sapiens (Human).